The chain runs to 640 residues: RAP domain-containing protein, chloroplastic (640 aa).

The transit peptide at 1-32 (MEAALLRPPPLAARGGVSIAIAFSVSRLPSAA) directs the protein to the chloroplast. The disordered stretch occupies residues 111–158 (SLQRMVASPKKKNKKKKSKKTNLKQKKAAEPKPPRDTDDDEDDEEEAD). The span at 119–136 (PKKKNKKKKSKKTNLKQK) shows a compositional bias: basic residues. Over residues 137–146 (KAAEPKPPRD) the composition is skewed to basic and acidic residues. Residues 147-158 (TDDDEDDEEEAD) are compositionally biased toward acidic residues. The 59-residue stretch at 575-633 (LAFEIDGPSHFSRNLGTPLGHTAFKRRYIAAAGWNLVSLSHQEWENLEGEFEQLEYLRR) folds into the RAP domain.

As to expression, expressed in roots, leaf sheaths, veins of leaf blade, mature leaves, endodermis of culm, panicles and anthers.

Its subcellular location is the plastid. It localises to the chloroplast. Its function is as follows. Probable RNA-binding protein that plays an essential role in chloroplast development. Regulates the ribosomal proteins homeostasis and ribosomal RNA development in chloroplasts. Involved the regulation of 16S rRNA and required for the expression of chloroplast-associated photosynthetic genes. The chain is RAP domain-containing protein, chloroplastic from Oryza sativa subsp. japonica (Rice).